The sequence spans 524 residues: Acetyl-CoA decarbonylase/synthase complex subunit beta (524 aa).

[Ni-Fe-S] cluster contacts are provided by cysteine 212, cysteine 215, cysteine 301, and cysteine 303. The tract at residues 436-466 (WVEEEEEEAEEVAEEAAAEAAPAAQPAQAAQ) is disordered. Acidic residues predominate over residues 437–452 (VEEEEEEAEEVAEEAA). A compositionally biased stretch (low complexity) spans 453-466 (AEAAPAAQPAQAAQ).

It belongs to the CdhC family. Monomer. The ACDS complex is made up of alpha, epsilon, beta, gamma and delta chains with a probable stoichiometry of (alpha(2)epsilon(2))(4)-beta(8)-(gamma(1)delta(1))(8). Requires [Ni-Fe-S] cluster as cofactor.

It catalyses the reaction Co(I)-[corrinoid Fe-S protein] + acetyl-CoA + H(+) = methyl-Co(III)-[corrinoid Fe-S protein] + CO + CoA. Functionally, part of a complex that catalyzes the reversible cleavage of acetyl-CoA, allowing autotrophic growth from CO(2). The alpha-epsilon complex generates CO from CO(2), while the beta subunit (this protein) combines the CO with CoA and a methyl group to form acetyl-CoA. The methyl group, which is incorporated into acetyl-CoA, is transferred to the beta subunit by a corrinoid iron-sulfur protein (the gamma-delta complex). The chain is Acetyl-CoA decarbonylase/synthase complex subunit beta from Archaeoglobus fulgidus (strain ATCC 49558 / DSM 4304 / JCM 9628 / NBRC 100126 / VC-16).